The primary structure comprises 524 residues: MMSMFRLSIPISASELLLASTVFCLVLWVVKAWQPRLPKGLKSPPGPWGWPVLGNVLTLGKSPHLALSRLSQRYGDVLQIRIGSTPVLVLSGLDTIRQALVRQGDDFKGRPDLYSFSLVTDGQSLTFSPDSGPVWAARRRLAQNALKSFSIASDPASSCSCYLEEHVSKEAEVLLSRLQEQMAEVGRFDPYRYIVVSVANVICAMCFSKRYDHDDQELLSLVNLSNEFGEGVASANPLDFFPILRYLPNPALDFFKDLNKRFYSFMQKMVKEHYKTFEKGQIRDVTDSLIEHCQDKRLDENANIQLSDEKIVNVVLDLFGAGFDTVTTAISWSLLYLVTNPNVQKKIQKELDTVIGRARQPRLSDRPQLPYMEAFILETFRHASFVPFTIPHSTTRDTSLSGFYIPKGRCVFVNQWQINHDQKLWGNPSEFQPERFLTLDGTINKALSEKVILFGLGKRKCIGETIARLEVFLFLAILLQQVEFSVPEGTKVDMTPIYGLTMKHARCEHFQVRVRTEGAESPAA.

Residues 33 to 44 (WQPRLPKGLKSP) are mitochondrial targeting signal. S71 carries O-linked (GlcNAc) serine glycosylation. Position 228 (F228) interacts with substrate. C461 is a heme binding site.

Belongs to the cytochrome P450 family. Interacts with cytosolic chaperones HSP70 and HSP90; this interaction is required for initial targeting to mitochondria. Interacts (via mitochondrial targeting signal) with TOMM40 (via N-terminus); this interaction is required for translocation across the mitochondrial outer membrane. Heme is required as a cofactor.

The protein localises to the endoplasmic reticulum membrane. It localises to the mitochondrion inner membrane. It is found in the microsome membrane. The protein resides in the cytoplasm. The catalysed reaction is an organic molecule + reduced [NADPH--hemoprotein reductase] + O2 = an alcohol + oxidized [NADPH--hemoprotein reductase] + H2O + H(+). The enzyme catalyses estrone + reduced [NADPH--hemoprotein reductase] + O2 = 2-hydroxyestrone + oxidized [NADPH--hemoprotein reductase] + H2O + H(+). It catalyses the reaction estrone + reduced [NADPH--hemoprotein reductase] + O2 = 4-hydroxyestrone + oxidized [NADPH--hemoprotein reductase] + H2O + H(+). It carries out the reaction estrone + reduced [NADPH--hemoprotein reductase] + O2 = 6alpha-hydroxyestrone + oxidized [NADPH--hemoprotein reductase] + H2O + H(+). The catalysed reaction is estrone + reduced [NADPH--hemoprotein reductase] + O2 = 15alpha-hydroxyestrone + oxidized [NADPH--hemoprotein reductase] + H2O + H(+). The enzyme catalyses estrone + reduced [NADPH--hemoprotein reductase] + O2 = 16alpha-hydroxyestrone + oxidized [NADPH--hemoprotein reductase] + H2O + H(+). It catalyses the reaction 17beta-estradiol + reduced [NADPH--hemoprotein reductase] + O2 = 2-hydroxy-17beta-estradiol + oxidized [NADPH--hemoprotein reductase] + H2O + H(+). It carries out the reaction 17beta-estradiol + reduced [NADPH--hemoprotein reductase] + O2 = 4-hydroxy-17beta-estradiol + oxidized [NADPH--hemoprotein reductase] + H2O + H(+). The catalysed reaction is 17beta-estradiol + reduced [NADPH--hemoprotein reductase] + O2 = 6alpha-hydroxy-17beta-estradiol + oxidized [NADPH--hemoprotein reductase] + H2O + H(+). The enzyme catalyses 17beta-estradiol + reduced [NADPH--hemoprotein reductase] + O2 = 7alpha-hydroxy-17beta-estradiol + oxidized [NADPH--hemoprotein reductase] + H2O + H(+). It catalyses the reaction 17beta-estradiol + reduced [NADPH--hemoprotein reductase] + O2 = 15alpha-hydroxy-17beta-estradiol + oxidized [NADPH--hemoprotein reductase] + H2O + H(+). It carries out the reaction (5Z,8Z,11Z)-eicosatrienoate + reduced [NADPH--hemoprotein reductase] + O2 = 19-hydroxy-(5Z,8Z,11Z)-eicosatrienoate + oxidized [NADPH--hemoprotein reductase] + H2O + H(+). The catalysed reaction is (5Z,8Z,11Z,14Z)-eicosatetraenoate + reduced [NADPH--hemoprotein reductase] + O2 = 16-hydroxy-(5Z,8Z,11Z,14Z)-eicosatetraenoate + oxidized [NADPH--hemoprotein reductase] + H2O + H(+). The enzyme catalyses (5Z,8Z,11Z,14Z)-eicosatetraenoate + reduced [NADPH--hemoprotein reductase] + O2 = 17-hydroxy-(5Z,8Z,11Z,14Z)-eicosatetraenoate + oxidized [NADPH--hemoprotein reductase] + H2O + H(+). It catalyses the reaction (5Z,8Z,11Z,14Z)-eicosatetraenoate + reduced [NADPH--hemoprotein reductase] + O2 = 18-hydroxy-(5Z,8Z,11Z,14Z)-eicosatetraenoate + oxidized [NADPH--hemoprotein reductase] + H2O + H(+). It carries out the reaction (5Z,8Z,11Z,14Z)-eicosatetraenoate + reduced [NADPH--hemoprotein reductase] + O2 = 19-hydroxy-(5Z,8Z,11Z,14Z)-eicosatetraenoate + oxidized [NADPH--hemoprotein reductase] + H2O + H(+). The catalysed reaction is (5Z,8Z,11Z,14Z,17Z)-eicosapentaenoate + reduced [NADPH--hemoprotein reductase] + O2 = 19-hydroxy-(5Z,8Z,11Z,14Z,17Z)-eicosapentaenoate + oxidized [NADPH--hemoprotein reductase] + H2O + H(+). The enzyme catalyses (5Z,8Z,11Z,14Z)-eicosatetraenoate + reduced [NADPH--hemoprotein reductase] + O2 = (8R,9S)-epoxy-(5Z,11Z,14Z)-eicosatrienoate + oxidized [NADPH--hemoprotein reductase] + H2O + H(+). It catalyses the reaction (5Z,8Z,11Z,14Z)-eicosatetraenoate + reduced [NADPH--hemoprotein reductase] + O2 = (11R,12S)-epoxy-(5Z,8Z,14Z)-eicosatrienoate + oxidized [NADPH--hemoprotein reductase] + H2O + H(+). It carries out the reaction (5Z,8Z,11Z,14Z)-eicosatetraenoate + reduced [NADPH--hemoprotein reductase] + O2 = (14S,15R)-epoxy-(5Z,8Z,11Z)-eicosatrienoate + oxidized [NADPH--hemoprotein reductase] + H2O + H(+). The catalysed reaction is (5Z,8Z,11Z,14Z)-eicosatetraenoate + reduced [NADPH--hemoprotein reductase] + O2 = (14R,15S)-epoxy-(5Z,8Z,11Z)-eicosatrienoate + oxidized [NADPH--hemoprotein reductase] + H2O + H(+). The enzyme catalyses (5Z,8Z,11Z,14Z,17Z)-eicosapentaenoate + reduced [NADPH--hemoprotein reductase] + O2 = (17R,18S)-epoxy-(5Z,8Z,11Z,14Z)-eicosatetraenoate + oxidized [NADPH--hemoprotein reductase] + H2O + H(+). It catalyses the reaction (4Z,7Z,10Z,13Z,16Z,19Z)-docosahexaenoate + reduced [NADPH--hemoprotein reductase] + O2 = (19S,20R)-epoxy-(4Z,7Z,10Z,13Z,16Z)-docosapentaenoate + oxidized [NADPH--hemoprotein reductase] + H2O + H(+). It carries out the reaction (4Z,7Z,10Z,13Z,16Z,19Z)-docosahexaenoate + reduced [NADPH--hemoprotein reductase] + O2 = (19R,20S)-epoxy-(4Z,7Z,10Z,13Z,16Z)-docosapentaenoate + oxidized [NADPH--hemoprotein reductase] + H2O + H(+). The catalysed reaction is all-trans-retinol + reduced [NADPH--hemoprotein reductase] + O2 = all-trans-retinal + oxidized [NADPH--hemoprotein reductase] + 2 H2O + H(+). The enzyme catalyses all-trans-retinal + reduced [NADPH--hemoprotein reductase] + O2 = all-trans-retinoate + oxidized [NADPH--hemoprotein reductase] + H2O + 2 H(+). It catalyses the reaction (13S)-hydroperoxy-(9Z,11E)-octadecadienoate = 13-oxo-(9Z,11E)-octadecadienoate + H2O. It carries out the reaction (12S)-hydroperoxy-(5Z,8Z,10E,14Z)-eicosatetraenoate = 12-oxo-(5Z,8Z,10E,14Z)-eicosatetraenoate + H2O. The catalysed reaction is (15S)-hydroperoxy-(5Z,8Z,11Z,13E)-eicosatetraenoate = 15-oxo-(5Z,8Z,11Z,13E)-eicosatetraenoate + H2O. The enzyme catalyses (5S)-hydroperoxy-(6E,8Z,11Z,14Z)-eicosatetraenoate = 5-oxo-(6E,8Z,11Z,14Z)-eicosatetraenoate + H2O. It functions in the pathway steroid hormone biosynthesis. Its pathway is lipid metabolism; fatty acid metabolism. The protein operates within cofactor metabolism; retinol metabolism. Its function is as follows. A cytochrome P450 monooxygenase involved in the metabolism of various endogenous substrates, including fatty acids, steroid hormones and vitamins. Mechanistically, uses molecular oxygen inserting one oxygen atom into a substrate, and reducing the second into a water molecule, with two electrons provided by NADPH via cytochrome P450 reductase (CPR; NADPH-ferrihemoprotein reductase). Catalyzes the hydroxylation of carbon-hydrogen bonds. Exhibits high catalytic activity for the formation of hydroxyestrogens from estrone (E1) and 17beta-estradiol (E2), namely 2-hydroxy E1 and E2, as well as D-ring hydroxylated E1 and E2 at the C15alpha and C16alpha positions. Displays different regioselectivities for polyunsaturated fatty acids (PUFA) hydroxylation. Catalyzes the epoxidation of double bonds of certain PUFA. Converts arachidonic acid toward epoxyeicosatrienoic acid (EET) regioisomers, 8,9-, 11,12-, and 14,15-EET, that function as lipid mediators in the vascular system. Displays an absolute stereoselectivity in the epoxidation of eicosapentaenoic acid (EPA) producing the 17(R),18(S) enantiomer. May play an important role in all-trans retinoic acid biosynthesis in extrahepatic tissues. Catalyzes two successive oxidative transformation of all-trans retinol to all-trans retinal and then to the active form all-trans retinoic acid. May also participate in eicosanoids metabolism by converting hydroperoxide species into oxo metabolites (lipoxygenase-like reaction, NADPH-independent). The sequence is that of Cytochrome P450 1A1 (CYP1A1) from Canis lupus familiaris (Dog).